Consider the following 93-residue polypeptide: Putative regulatory protein Fnod_1678 (93 aa).

This sequence belongs to the RemA family.

This Fervidobacterium nodosum (strain ATCC 35602 / DSM 5306 / Rt17-B1) protein is Putative regulatory protein Fnod_1678.